The sequence spans 633 residues: FAD-binding monooxygenase andJ (633 aa).

Residues 117–120 (TWYW), 129–130 (DT), and Tyr135 each bind FAD. 127-129 (MCD) lines the NADP(+) pocket. NADP(+) contacts are provided by residues 269–275 (TGASAVQ) and 292–293 (RT).

Belongs to the FAD-binding monooxygenase family. Requires FAD as cofactor.

It functions in the pathway secondary metabolite biosynthesis; terpenoid biosynthesis. Its function is as follows. FAD-binding monooxygenase; part of the gene cluster that mediates the biosynthesis of anditomin, a fungal meroterpenoid. The first step of the pathway is the synthesis of 3,5-dimethylorsellinic acid (DMOA) by the polyketide synthase andM. DMOA is then converted to the phthalide compound 5,7-dihydroxy-4,6-dimethylphthalide (DHDMP) by the cytochrome P450 monooxygenase andK, which is further prenylated by the prenyltransferase andD to yield farnesyl-DHDMP. Further epoxidation by the FAD-dependent monooxygenase andE leads to epoxyfarnesyl-DHDMP. The next step involves the terpene cyclase andB that converts epoxyfarnesyl-DHDMP into preandiloid A through opening of the epoxide ring followed by the cyclization of the farnesyl moiety. Preandiloid A is in turn oxidized at the C-3 hydroxyl group to yield preandiloid B by the dehydrogenase andC. The dioxygenase andA is solely responsible for the dehydrogenation of preandiloid B leading to the enone preandiloid C, as well as for the intriguing structural rearrangement to generate the bicyclo[2.2.2]octane core, transforming preandiloid C into andiconin. FAD-binding monooxygenase andJ then produces andilesin D which is reduced by dehydrogenase andI to yield andilesin A. Action of acetyltransferase andG followed by a spontaneous acetate elimination leads then to andilesin B, which is in turn substrate of the short chain dehydrogenase andH to yield andilesin C. Finally, the dioxygenase andF catalyzes the transformation of andilesin C to anditomin. This chain is FAD-binding monooxygenase andJ, found in Emericella variicolor (Aspergillus stellatus).